The following is a 161-amino-acid chain: Nucleotide-binding protein GM21_0633 (161 aa).

The protein belongs to the YajQ family.

Its function is as follows. Nucleotide-binding protein. This chain is Nucleotide-binding protein GM21_0633, found in Geobacter sp. (strain M21).